Consider the following 154-residue polypeptide: Myoglobin (154 aa).

The region spanning 2 to 148 (GLSDGEWQLV…FRKDIAAKYK (147 aa)) is the Globin domain. Serine 4 is modified (phosphoserine). Histidine 65 is a binding site for nitrite. Histidine 65 contributes to the O2 binding site. Threonine 68 carries the phosphothreonine modification. Position 94 (histidine 94) interacts with heme b.

This sequence belongs to the globin family. Monomeric.

It is found in the cytoplasm. It localises to the sarcoplasm. The catalysed reaction is Fe(III)-heme b-[protein] + nitric oxide + H2O = Fe(II)-heme b-[protein] + nitrite + 2 H(+). It carries out the reaction H2O2 + AH2 = A + 2 H2O. In terms of biological role, monomeric heme protein which primary function is to store oxygen and facilitate its diffusion within muscle tissues. Reversibly binds oxygen through a pentacoordinated heme iron and enables its timely and efficient release as needed during periods of heightened demand. Depending on the oxidative conditions of tissues and cells, and in addition to its ability to bind oxygen, it also has a nitrite reductase activity whereby it regulates the production of bioactive nitric oxide. Under stress conditions, like hypoxia and anoxia, it also protects cells against reactive oxygen species thanks to its pseudoperoxidase activity. The sequence is that of Myoglobin (MB) from Globicephala melas (Long-finned pilot whale).